We begin with the raw amino-acid sequence, 440 residues long: ATP-dependent protease ATPase subunit HslU (440 aa).

Residues isoleucine 18 and 60-65 each bind ATP; that span reads GVGKTE. The segment at 138–159 is disordered; it reads RAQSFDQEDPSAGTRQKLRKKL. The ATP site is built by aspartate 252, glutamate 318, and arginine 390.

This sequence belongs to the ClpX chaperone family. HslU subfamily. A double ring-shaped homohexamer of HslV is capped on each side by a ring-shaped HslU homohexamer. The assembly of the HslU/HslV complex is dependent on binding of ATP.

The protein localises to the cytoplasm. In terms of biological role, ATPase subunit of a proteasome-like degradation complex; this subunit has chaperone activity. The binding of ATP and its subsequent hydrolysis by HslU are essential for unfolding of protein substrates subsequently hydrolyzed by HslV. HslU recognizes the N-terminal part of its protein substrates and unfolds these before they are guided to HslV for hydrolysis. The sequence is that of ATP-dependent protease ATPase subunit HslU from Alkalilimnicola ehrlichii (strain ATCC BAA-1101 / DSM 17681 / MLHE-1).